The chain runs to 452 residues: 5'-nucleotidase domain-containing protein 1 (452 aa).

Aspartate 16 serves as the catalytic Nucleophile. Positions 16 and 18 each coordinate Mg(2+). Catalysis depends on aspartate 18, which acts as the Proton donor. Lysine 171 bears the N6-acetyllysine mark. Mg(2+) is bound at residue aspartate 313. Basic and acidic residues predominate over residues 339–361; it reads GDKDGKPEESEPEEKKGKYEGSK. A disordered region spans residues 339-365; the sequence is GDKDGKPEESEPEEKKGKYEGSKAKPL.

It belongs to the 5'(3')-deoxyribonucleotidase family.

This Bos taurus (Bovine) protein is 5'-nucleotidase domain-containing protein 1 (NT5DC1).